The sequence spans 257 residues: GTP cyclohydrolase FolE2 (257 aa).

The protein belongs to the GTP cyclohydrolase IV family.

It catalyses the reaction GTP + H2O = 7,8-dihydroneopterin 3'-triphosphate + formate + H(+). Its pathway is cofactor biosynthesis; 7,8-dihydroneopterin triphosphate biosynthesis; 7,8-dihydroneopterin triphosphate from GTP: step 1/1. Functionally, converts GTP to 7,8-dihydroneopterin triphosphate. This chain is GTP cyclohydrolase FolE2, found in Dictyoglomus thermophilum (strain ATCC 35947 / DSM 3960 / H-6-12).